Consider the following 381-residue polypeptide: Queuine tRNA-ribosyltransferase (381 aa).

Residue Asp96 is the Proton acceptor of the active site. Residues 96 to 100, Asp150, Gln193, and Gly220 each bind substrate; that span reads DSGGF. Residues 251-257 are RNA binding; sequence GVGSPDA. Asp270 functions as the Nucleophile in the catalytic mechanism. The interval 275–279 is RNA binding; important for wobble base 34 recognition; the sequence is TRIAR. Zn(2+)-binding residues include Cys308, Cys310, Cys313, and His339.

Belongs to the queuine tRNA-ribosyltransferase family. In terms of assembly, homodimer. Within each dimer, one monomer is responsible for RNA recognition and catalysis, while the other monomer binds to the replacement base PreQ1. Zn(2+) is required as a cofactor.

The catalysed reaction is 7-aminomethyl-7-carbaguanine + guanosine(34) in tRNA = 7-aminomethyl-7-carbaguanosine(34) in tRNA + guanine. It participates in tRNA modification; tRNA-queuosine biosynthesis. Functionally, catalyzes the base-exchange of a guanine (G) residue with the queuine precursor 7-aminomethyl-7-deazaguanine (PreQ1) at position 34 (anticodon wobble position) in tRNAs with GU(N) anticodons (tRNA-Asp, -Asn, -His and -Tyr). Catalysis occurs through a double-displacement mechanism. The nucleophile active site attacks the C1' of nucleotide 34 to detach the guanine base from the RNA, forming a covalent enzyme-RNA intermediate. The proton acceptor active site deprotonates the incoming PreQ1, allowing a nucleophilic attack on the C1' of the ribose to form the product. After dissociation, two additional enzymatic reactions on the tRNA convert PreQ1 to queuine (Q), resulting in the hypermodified nucleoside queuosine (7-(((4,5-cis-dihydroxy-2-cyclopenten-1-yl)amino)methyl)-7-deazaguanosine). The protein is Queuine tRNA-ribosyltransferase of Bacillus velezensis (strain DSM 23117 / BGSC 10A6 / LMG 26770 / FZB42) (Bacillus amyloliquefaciens subsp. plantarum).